The chain runs to 152 residues: Methylglyoxal synthase (152 aa).

Residues 6-152 (RKISARKSIA…YDGYLAERLA (147 aa)) form the MGS-like domain. Residues H19, K23, 45 to 48 (TGTT), and 65 to 66 (SG) contribute to the substrate site. The active-site Proton donor/acceptor is D71. H98 provides a ligand contact to substrate.

It belongs to the methylglyoxal synthase family.

The enzyme catalyses dihydroxyacetone phosphate = methylglyoxal + phosphate. Its function is as follows. Catalyzes the formation of methylglyoxal from dihydroxyacetone phosphate. This chain is Methylglyoxal synthase, found in Actinobacillus pleuropneumoniae serotype 3 (strain JL03).